The primary structure comprises 546 residues: Chaperonin GroEL (546 aa).

ATP is bound by residues 29–32 (TMGP), K50, 86–90 (DGTTT), G412, 476–478 (NAA), and D492.

Belongs to the chaperonin (HSP60) family. Forms a cylinder of 14 subunits composed of two heptameric rings stacked back-to-back. Interacts with the co-chaperonin GroES.

The protein resides in the cytoplasm. The enzyme catalyses ATP + H2O + a folded polypeptide = ADP + phosphate + an unfolded polypeptide.. Functionally, together with its co-chaperonin GroES, plays an essential role in assisting protein folding. The GroEL-GroES system forms a nano-cage that allows encapsulation of the non-native substrate proteins and provides a physical environment optimized to promote and accelerate protein folding. Its function is as follows. May play a protective role against the defense mechanisms generated by the infected macrophages. This chain is Chaperonin GroEL, found in Legionella micdadei (Tatlockia micdadei).